A 154-amino-acid chain; its full sequence is Ribosome maturation factor RimP (154 aa).

It belongs to the RimP family.

The protein resides in the cytoplasm. Required for maturation of 30S ribosomal subunits. This Hydrogenobaculum sp. (strain Y04AAS1) protein is Ribosome maturation factor RimP.